The following is a 378-amino-acid chain: CST complex subunit STN1 (378 aa).

Positions 8 to 195 (MECESSPREE…KVYDQPFRNP (188 aa)) are interaction with CTC1. Positions 64–165 (VDIMGAVISV…EICANIYYKV (102 aa)) form a DNA-binding region, OB. Winged helix-turn-helix (wHTH) regions lie at residues 201-305 (EALN…YVTT) and 306-378 (KDKD…YAAF).

This sequence belongs to the STN1 family. Component of the CST complex, composed of TEN1/C17orf106, CTC1/C17orf68 and STN1; in the complex interacts directly with TEN1 and CTC1. Interacts with ACD/TPP1. Interacts with POT1 and POLA1.

The protein localises to the nucleus. It localises to the chromosome. Its subcellular location is the telomere. In terms of biological role, component of the CST complex proposed to act as a specialized replication factor promoting DNA replication under conditions of replication stress or natural replication barriers such as the telomere duplex. The CST complex binds single-stranded DNA with high affinity in a sequence-independent manner, while isolated subunits bind DNA with low affinity by themselves. Initially the CST complex has been proposed to protect telomeres from DNA degradation. However, the CST complex has been shown to be involved in several aspects of telomere replication. The CST complex inhibits telomerase and is involved in telomere length homeostasis; it is proposed to bind to newly telomerase-synthesized 3' overhangs and to terminate telomerase action implicating the association with the ACD:POT1 complex thus interfering with its telomerase stimulation activity. The CST complex is also proposed to be involved in fill-in synthesis of the telomeric C-strand probably implicating recruitment and activation of DNA polymerase alpha. The CST complex facilitates recovery from many forms of exogenous DNA damage; seems to be involved in the re-initiation of DNA replication at repaired forks and/or dormant origins. Required for efficicient replication of the duplex region of the telomere. Promotes efficient replication of lagging-strand telomeres. Promotes general replication start following replication-fork stalling implicating new origin firing. May be in involved in C-strand fill-in during late S/G2 phase independent of its role in telomere duplex replication. In Mus musculus (Mouse), this protein is CST complex subunit STN1.